A 208-amino-acid polypeptide reads, in one-letter code: Large ribosomal subunit protein bL25 (208 aa).

A disordered region spans residues 178–208 (LPPQQSEVPEPDSEEEPKEPEAIKEKDNDGE). The span at 186–195 (PEPDSEEEPK) shows a compositional bias: acidic residues. Residues 196-208 (EPEAIKEKDNDGE) are compositionally biased toward basic and acidic residues.

Belongs to the bacterial ribosomal protein bL25 family. CTC subfamily. In terms of assembly, part of the 50S ribosomal subunit; part of the 5S rRNA/L5/L18/L25 subcomplex. Contacts the 5S rRNA. Binds to the 5S rRNA independently of L5 and L18.

Functionally, this is one of the proteins that binds to the 5S RNA in the ribosome where it forms part of the central protuberance. The chain is Large ribosomal subunit protein bL25 from Bacillus pumilus (strain SAFR-032).